The sequence spans 219 residues: Ribonuclease T (219 aa).

Residues Val20 to Phe194 enclose the Exonuclease domain. 4 residues coordinate Mg(2+): Asp23, Glu25, His181, and Asp186. His181 acts as the Proton donor/acceptor in catalysis.

Belongs to the RNase T family. Homodimer. Requires Mg(2+) as cofactor.

Functionally, trims short 3' overhangs of a variety of RNA species, leaving a one or two nucleotide 3' overhang. Responsible for the end-turnover of tRNA: specifically removes the terminal AMP residue from uncharged tRNA (tRNA-C-C-A). Also appears to be involved in tRNA biosynthesis. The sequence is that of Ribonuclease T from Buchnera aphidicola subsp. Schizaphis graminum (strain Sg).